Consider the following 145-residue polypeptide: Maximins 5/H4 type 2 (145 aa).

The first 18 residues, 1–18, serve as a signal peptide directing secretion; that stretch reads MNFKYIVAVSFLIASAYA. Propeptides lie at residues 19–43 and 74–124; these read RSVQ…REIR and TAEE…KEKR. The residue at position 144 (L144) is a Leucine amide.

It belongs to the bombinin family. In terms of tissue distribution, expressed by the skin glands.

It localises to the secreted. Functionally, maximin-5 shows antibacterial activity against both Gram-positive and Gram-negative bacteria. The only exception is the resistance of E.coli. Also shows antimicrobial activity against fungi C.albicans, A.flavus and P.uticale. It has little hemolytic activity. It does not possess a significant cytotoxicity against tumor cell lines. It does not possess a significant anti-HIV activity. In terms of biological role, maximin-H4 shows antibacterial activity against both Gram-positive and Gram-negative bacteria. It also shows antimicrobial activity against the fungus C.albicans. Shows strong hemolytic activity. This chain is Maximins 5/H4 type 2, found in Bombina maxima (Giant fire-bellied toad).